Reading from the N-terminus, the 120-residue chain is MSFYESVFIVRQDVSLNDIDKIVDDFSKIIKDNNGAIVKKEYWGLRALAYKIGNHKKGHYYLLGLDTTPAVKQELERKMKLNENIIRFLTQKVDSISNEPSPILKNQSTENTPVIDVTAN.

Polar residues predominate over residues 97–112 (SNEPSPILKNQSTENT). The disordered stretch occupies residues 97–120 (SNEPSPILKNQSTENTPVIDVTAN).

This sequence belongs to the bacterial ribosomal protein bS6 family.

Functionally, binds together with bS18 to 16S ribosomal RNA. This is Small ribosomal subunit protein bS6 from Rickettsia bellii (strain RML369-C).